The chain runs to 406 residues: Peptidyl-alpha-hydroxyglycine alpha-amidating lyase 2 (406 aa).

The signal sequence occupies residues 1–19 (MSRLLFVALLAISLGYVAS). NHL repeat units lie at residues 168–209 (GAIK…FKPF), 218–261 (GKRF…FNAA), 264–308 (LLRT…PKAG), and 358–402 (DPRS…RVWK). 2 disulfides stabilise this stretch: C231–C251 and C293–C304.

Belongs to the peptidyl-alpha-hydroxyglycine alpha-amidating lyase family. Zn(2+) serves as cofactor. N-glycosylated. Only found in a subset of neurons distributed throughout all levels of the central nervous system (CNS). Present in at least some neuroendocrine cells. In adult brains, it is only present in a small handful of cells, the majority of which being distributed in distal parts of the medulla, with a higher expression in the posterior surface of the brain (at protein level).

It is found in the secreted. The catalysed reaction is a [peptide]-C-terminal (2S)-2-hydroxyglycine = a [peptide]-C-terminal amide + glyoxylate. Its function is as follows. Peptidyl-alpha-hydroxylglycine alpha-amidating lyase that catalyzes an essential reaction in C-terminal alpha-amidation of peptides. Mediates the dismutation of the unstable peptidyl(2-hydroxyglycine) intermediate to glyoxylate and the corresponding desglycine peptide amide. C-terminal amidation of peptides such as neuropeptides is essential for full biological activity. The polypeptide is Peptidyl-alpha-hydroxyglycine alpha-amidating lyase 2 (Pal2) (Drosophila melanogaster (Fruit fly)).